The chain runs to 363 residues: Phosphoserine aminotransferase (363 aa).

An L-glutamate-binding site is contributed by Arg42. Residues Trp105, Thr155, Asp175, and Gln198 each coordinate pyridoxal 5'-phosphate. An N6-(pyridoxal phosphate)lysine modification is found at Lys199. Residue 240-241 (NT) participates in pyridoxal 5'-phosphate binding.

Belongs to the class-V pyridoxal-phosphate-dependent aminotransferase family. SerC subfamily. Homodimer. It depends on pyridoxal 5'-phosphate as a cofactor.

The protein localises to the cytoplasm. It carries out the reaction O-phospho-L-serine + 2-oxoglutarate = 3-phosphooxypyruvate + L-glutamate. It catalyses the reaction 4-(phosphooxy)-L-threonine + 2-oxoglutarate = (R)-3-hydroxy-2-oxo-4-phosphooxybutanoate + L-glutamate. It participates in amino-acid biosynthesis; L-serine biosynthesis; L-serine from 3-phospho-D-glycerate: step 2/3. It functions in the pathway cofactor biosynthesis; pyridoxine 5'-phosphate biosynthesis; pyridoxine 5'-phosphate from D-erythrose 4-phosphate: step 3/5. Functionally, catalyzes the reversible conversion of 3-phosphohydroxypyruvate to phosphoserine and of 3-hydroxy-2-oxo-4-phosphonooxybutanoate to phosphohydroxythreonine. The sequence is that of Phosphoserine aminotransferase from Herminiimonas arsenicoxydans.